The primary structure comprises 328 residues: Zinc chaperone YeiR (328 aa).

9–17 (GFLGSGKTT) serves as a coordination point for GTP. The CXCC motif signature appears at 63–66 (CMCC). Aspartate 155 is a binding site for GTP. The 81-residue stretch at 241–321 (CGWIFDADTV…WNALQSALLK (81 aa)) folds into the CobW C-terminal domain.

It belongs to the SIMIBI class G3E GTPase family. ZNG1 subfamily. As to quaternary structure, oligomerizes in the presence of Zn(2+).

It catalyses the reaction GTP + H2O = GDP + phosphate + H(+). Its activity is regulated as follows. GTPase activity is enhanced by Zn(2+) binding. Its function is as follows. Zinc chaperone that directly transfers zinc cofactor to target proteins, thereby activating them. Zinc is transferred from the CXCC motif in the GTPase domain to the zinc binding site in target proteins in a process requiring GTP hydrolysis. In Escherichia coli (strain K12), this protein is Zinc chaperone YeiR (yeiR).